The chain runs to 91 residues: UPF0250 protein Psyr_4360 (91 aa).

It belongs to the UPF0250 family.

The chain is UPF0250 protein Psyr_4360 from Pseudomonas syringae pv. syringae (strain B728a).